The primary structure comprises 252 residues: Protein IRON-RELATED TRANSCRIPTION FACTOR 3 (252 aa).

The tract at residues 36–49 is basic motif; that stretch reads PRKVHKSEREKLKR. Residues 36-86 form the bHLH domain; that stretch reads PRKVHKSEREKLKRGHLNDLFGELGNMLEADRQSNGKACILTDTTRILRDL. The helix-loop-helix motif stretch occupies residues 50-86; it reads GHLNDLFGELGNMLEADRQSNGKACILTDTTRILRDL. A coiled-coil region spans residues 76 to 131; that stretch reads LTDTTRILRDLLSQVKSLRQENSTLQNESNYVTMERNELQDENGALRSEISDLQNE. The disordered stretch occupies residues 135–252; that stretch reads RATGSPGWGH…GLPRMEDEQM (118 aa). Residues 162 to 176 show a composition bias toward low complexity; sequence PSQQPMQPSPMTTST. A compositionally biased stretch (acidic residues) spans 208-219; sequence PAEDPEPSEDQE.

It belongs to the bHLH protein family.

The protein resides in the nucleus. Functionally, transcription factor that acts as a negative regulator of the iron deficiency response. Suppresses the induction of iron deficiency responsive genes, such as NAS1, NAS2, IRO2, IRT1, YSL15, and NRAMP1. The chain is Protein IRON-RELATED TRANSCRIPTION FACTOR 3 from Oryza sativa subsp. japonica (Rice).